A 474-amino-acid polypeptide reads, in one-letter code: 6-phospho-beta-glucosidase AscB (474 aa).

Glu180 functions as the Proton donor in the catalytic mechanism. Glu372 functions as the Nucleophile in the catalytic mechanism.

It belongs to the glycosyl hydrolase 1 family.

It carries out the reaction 6-phospho-beta-D-glucosyl-(1-&gt;4)-D-glucose + H2O = D-glucose 6-phosphate + D-glucose. Its function is as follows. Can hydrolyze salicin, cellobiose, and probably arbutin. This Escherichia coli (strain K12) protein is 6-phospho-beta-glucosidase AscB (ascB).